The primary structure comprises 294 residues: Enoyl-CoA hydratase domain-containing protein 3, mitochondrial (294 aa).

The transit peptide at 1-61 directs the protein to the mitochondrion; sequence MSWLRSCGER…IILNNPQQRN (61 aa).

Belongs to the enoyl-CoA hydratase/isomerase family.

It is found in the mitochondrion. Its function is as follows. May play a role in fatty acid biosynthesis and insulin sensitivity. The protein is Enoyl-CoA hydratase domain-containing protein 3, mitochondrial (echdc3) of Xenopus laevis (African clawed frog).